The sequence spans 147 residues: Diaminohydroxyphosphoribosylamino-pyrimidine deaminase (147 aa).

A CMP/dCMP-type deaminase domain is found at 1-123; it reads MNDIFYMKRA…YLKKHGICVK (123 aa). H50 contacts Zn(2+). The active-site Proton donor is E52. Residues C75 and C84 each coordinate Zn(2+).

Belongs to the cytidine and deoxycytidylate deaminase family. Zn(2+) is required as a cofactor.

The enzyme catalyses 2,5-diamino-6-hydroxy-4-(5-phosphoribosylamino)-pyrimidine + H2O + H(+) = 5-amino-6-(5-phospho-D-ribosylamino)uracil + NH4(+). It participates in cofactor biosynthesis; riboflavin biosynthesis; 5-amino-6-(D-ribitylamino)uracil from GTP: step 2/4. This Buchnera aphidicola subsp. Acyrthosiphon pisum (strain APS) (Acyrthosiphon pisum symbiotic bacterium) protein is Diaminohydroxyphosphoribosylamino-pyrimidine deaminase (ribD1).